A 465-amino-acid polypeptide reads, in one-letter code: Probable Xaa-Pro aminopeptidase pepP (465 aa).

Mn(2+)-binding residues include D263, D274, E397, and E437.

Belongs to the peptidase M24B family. The cofactor is Mn(2+).

The catalysed reaction is Release of any N-terminal amino acid, including proline, that is linked to proline, even from a dipeptide or tripeptide.. In terms of biological role, catalyzes the removal of a penultimate prolyl residue from the N-termini of peptides. This is Probable Xaa-Pro aminopeptidase pepP (pepP) from Emericella nidulans (strain FGSC A4 / ATCC 38163 / CBS 112.46 / NRRL 194 / M139) (Aspergillus nidulans).